The following is a 310-amino-acid chain: Deoxyribonuclease gamma (310 aa).

The first 25 residues, 1–25 (MSLYPASPYLASLLLFILALHGALS), serve as a signal peptide directing secretion. A Bipartite nuclear localization signal motif is present at residues 40-56 (KKENHNAMDIIVKIIKR). Catalysis depends on residues glutamate 105 and histidine 160. A disulfide bridge links cysteine 199 with cysteine 236. The tract at residues 289–310 (SRAFTNSRKSVSLKKKKKGSRS) is not required for free DNA-nuclease activity but required for activity towards liposome-coated DNA. The Nuclear localization signal signature appears at 301–307 (LKKKKKG).

This sequence belongs to the DNase I family. Monomer. Requires Ca(2+) as cofactor. It depends on Mg(2+) as a cofactor. Seems to be synthesized as an inactive precursor protein and converted into an active mature enzyme by removal of the N-terminal precursor peptide during apoptosis. In terms of processing, poly-ADP-ribosylated by PARP1. ADP-ribosylation negatively regulates enzymatic activity during apoptosis. In terms of tissue distribution, detected at high levels in spleen, lymph nodes, thymus and liver. Observed also in kidney and testis, but not in brain or heart.

Its subcellular location is the nucleus. The protein resides in the secreted. Its activity is regulated as follows. Inhibited by zinc. Its function is as follows. Has DNA hydrolytic activity. Is capable of both single- and double-stranded DNA cleavage, producing DNA fragments with 3'-OH ends. Can cleave chromatin to nucleosomal units and cleaves nucleosomal and liposome-coated DNA. Acts in internucleosomal DNA fragmentation (INDF) during apoptosis and necrosis. The role in apoptosis includes myogenic and neuronal differentiation, and BCR-mediated clonal deletion of self-reactive B cells. Is active on chromatin in apoptotic cell-derived membrane-coated microparticles and thus suppresses anti-DNA autoimmunity. Together with DNASE1, plays a key role in degrading neutrophil extracellular traps (NETs). NETs are mainly composed of DNA fibers and are released by neutrophils to bind pathogens during inflammation. Degradation of intravascular NETs by DNASE1 and DNASE1L3 is required to prevent formation of clots that obstruct blood vessels and cause organ damage following inflammation. This chain is Deoxyribonuclease gamma (Dnase1l3), found in Rattus norvegicus (Rat).